We begin with the raw amino-acid sequence, 521 residues long: GMP synthase [glutamine-hydrolyzing] (521 aa).

Residues 10-204 form the Glutamine amidotransferase type-1 domain; the sequence is SLLILDFGSQ…ALGICGCEND (195 aa). The active-site Nucleophile is Cys87. Active-site residues include His178 and Glu180. A GMPS ATP-PPase domain is found at 205-396; the sequence is WNMHNFAEEQ…LGMPREMLMR (192 aa). 232–238 is a binding site for ATP; the sequence is SGGVDSS.

As to quaternary structure, homodimer.

It carries out the reaction XMP + L-glutamine + ATP + H2O = GMP + L-glutamate + AMP + diphosphate + 2 H(+). It functions in the pathway purine metabolism; GMP biosynthesis; GMP from XMP (L-Gln route): step 1/1. In terms of biological role, catalyzes the synthesis of GMP from XMP. In Wolinella succinogenes (strain ATCC 29543 / DSM 1740 / CCUG 13145 / JCM 31913 / LMG 7466 / NCTC 11488 / FDC 602W) (Vibrio succinogenes), this protein is GMP synthase [glutamine-hydrolyzing].